The primary structure comprises 872 residues: Probably inactive leucine-rich repeat receptor-like protein kinase At5g06940 (872 aa).

Residues 1–26 (MATRFKHQFSISLALTFFFFFTKTFS) form the signal peptide. Residues 27–540 (FTENEELGNL…RSNFHKKGGK (514 aa)) are Extracellular-facing. Residues asparagine 55, asparagine 63, and asparagine 86 are each glycosylated (N-linked (GlcNAc...) asparagine). 18 LRR repeats span residues 79 to 98 (SINL…ICDL), 99 to 122 (PYLT…LSRC), 123 to 146 (VTLE…ISEF), 147 to 169 (SSLK…DLGL), 171 to 193 (FNLQ…AIGK), 195 to 217 (SELV…SFLG), 219 to 243 (LDKL…FVGL), 244 to 267 (TSLR…LGPS), 269 to 292 (KNLV…ICSG), 294 to 316 (RLIN…IGEC), 317 to 340 (LSLE…LWKL), 341 to 365 (PRIK…SLAS), 367 to 389 (LEQV…GLVK), 391 to 412 (LYKF…FCDS), 413 to 435 (PVLS…LKNC), 436 to 459 (KKLV…LADL), 460 to 482 (HVLT…GLQN), and 484 to 506 (KLAL…LVSG). N-linked (GlcNAc...) asparagine glycosylation is present at asparagine 129. N-linked (GlcNAc...) asparagine glycosylation occurs at asparagine 255. N-linked (GlcNAc...) asparagine glycosylation is present at asparagine 297. Residue asparagine 374 is glycosylated (N-linked (GlcNAc...) asparagine). N-linked (GlcNAc...) asparagine glycosylation occurs at asparagine 419. The N-linked (GlcNAc...) asparagine glycan is linked to asparagine 489. A helical membrane pass occupies residues 541-561 (ALVLSLICLALAIATFLAVLY). Residues 562-872 (RYSRKKVQFK…ISSSVSPVSA (311 aa)) are Cytoplasmic-facing. At threonine 585 the chain carries Phosphothreonine. One can recognise a Protein kinase domain in the interval 589–863 (LMKVVNESCP…VKVIKLLEGI (275 aa)). ATP is bound by residues 595-603 (ESCPSGSEV) and lysine 617. 4 positions are modified to phosphotyrosine: tyrosine 662, tyrosine 699, tyrosine 754, and tyrosine 761.

Belongs to the protein kinase superfamily. Ser/Thr protein kinase family.

Its subcellular location is the membrane. This chain is Probably inactive leucine-rich repeat receptor-like protein kinase At5g06940, found in Arabidopsis thaliana (Mouse-ear cress).